We begin with the raw amino-acid sequence, 155 residues long: Deoxyuridine 5'-triphosphate nucleotidohydrolase (155 aa).

Residues 74–76 (RSG), Asn87, and 91–93 (LID) contribute to the substrate site.

The protein belongs to the dUTPase family. Mg(2+) serves as cofactor.

It carries out the reaction dUTP + H2O = dUMP + diphosphate + H(+). Its pathway is pyrimidine metabolism; dUMP biosynthesis; dUMP from dCTP (dUTP route): step 2/2. This enzyme is involved in nucleotide metabolism: it produces dUMP, the immediate precursor of thymidine nucleotides and it decreases the intracellular concentration of dUTP so that uracil cannot be incorporated into DNA. This is Deoxyuridine 5'-triphosphate nucleotidohydrolase from Xanthomonas axonopodis pv. citri (strain 306).